Reading from the N-terminus, the 155-residue chain is D-aminoacyl-tRNA deacylase (155 aa).

The Gly-cisPro motif, important for rejection of L-amino acids signature appears at 137-138 (GP).

The protein belongs to the DTD family. In terms of assembly, homodimer.

It is found in the cytoplasm. It catalyses the reaction glycyl-tRNA(Ala) + H2O = tRNA(Ala) + glycine + H(+). The enzyme catalyses a D-aminoacyl-tRNA + H2O = a tRNA + a D-alpha-amino acid + H(+). An aminoacyl-tRNA editing enzyme that deacylates mischarged D-aminoacyl-tRNAs. Also deacylates mischarged glycyl-tRNA(Ala), protecting cells against glycine mischarging by AlaRS. Acts via tRNA-based rather than protein-based catalysis; rejects L-amino acids rather than detecting D-amino acids in the active site. By recycling D-aminoacyl-tRNA to D-amino acids and free tRNA molecules, this enzyme counteracts the toxicity associated with the formation of D-aminoacyl-tRNA entities in vivo and helps enforce protein L-homochirality. The protein is D-aminoacyl-tRNA deacylase of Nitrosococcus oceani (strain ATCC 19707 / BCRC 17464 / JCM 30415 / NCIMB 11848 / C-107).